A 306-amino-acid chain; its full sequence is Recombination-associated protein RdgC (306 aa).

Belongs to the RdgC family.

It is found in the cytoplasm. It localises to the nucleoid. May be involved in recombination. The sequence is that of Recombination-associated protein RdgC from Pseudomonas aeruginosa (strain LESB58).